The primary structure comprises 579 residues: Thiol:disulfide interchange protein DsbD (579 aa).

The signal sequence occupies residues 1–16 (MKKLFLFFTLIFTAFA). Intrachain disulfides connect Cys-124-Cys-129 and Cys-193-Cys-315. 8 helical membrane passes run 178 to 198 (IFGFFVLGLGLAFTPCVLPML), 230 to 250 (LTYTLLGLAVAAIGLPFQIAL), 254 to 274 (YVMIGLSILFVVLALSMFGLF), 296 to 316 (GAFGGAFAMGMIAGLVASPCT), 337 to 357 (AVTLYLLALGMGVPLMLITLF), 376 to 396 (FGFVMLALPVFLLSRILPEVW), 397 to 417 (ESRLWAGLATVFFIWFALQMS), and 420 to 440 (GFGYAIKIISFALAMVTVQPL). Residues 449–579 (TTTQSAVENM…AFSNWIEKLL (131 aa)) enclose the Thioredoxin domain. A disulfide bond links Cys-495 and Cys-498.

The protein belongs to the thioredoxin family. DsbD subfamily.

It localises to the cell inner membrane. The catalysed reaction is [protein]-dithiol + NAD(+) = [protein]-disulfide + NADH + H(+). It carries out the reaction [protein]-dithiol + NADP(+) = [protein]-disulfide + NADPH + H(+). Its function is as follows. Required to facilitate the formation of correct disulfide bonds in some periplasmic proteins and for the assembly of the periplasmic c-type cytochromes. Acts by transferring electrons from cytoplasmic thioredoxin to the periplasm. This transfer involves a cascade of disulfide bond formation and reduction steps. The sequence is that of Thiol:disulfide interchange protein DsbD from Haemophilus influenzae (strain PittGG).